The primary structure comprises 324 residues: Beta-ketoacyl-[acyl-carrier-protein] synthase III (324 aa).

Residues Cys112 and His251 contribute to the active site. The segment at 252–256 is ACP-binding; that stretch reads QANLR. Asn281 is a catalytic residue.

Belongs to the thiolase-like superfamily. FabH family. In terms of assembly, homodimer.

It localises to the cytoplasm. It catalyses the reaction malonyl-[ACP] + acetyl-CoA + H(+) = 3-oxobutanoyl-[ACP] + CO2 + CoA. Its pathway is lipid metabolism; fatty acid biosynthesis. Catalyzes the condensation reaction of fatty acid synthesis by the addition to an acyl acceptor of two carbons from malonyl-ACP. Catalyzes the first condensation reaction which initiates fatty acid synthesis and may therefore play a role in governing the total rate of fatty acid production. Possesses both acetoacetyl-ACP synthase and acetyl transacylase activities. Its substrate specificity determines the biosynthesis of branched-chain and/or straight-chain of fatty acids. This is Beta-ketoacyl-[acyl-carrier-protein] synthase III from Clostridium perfringens (strain ATCC 13124 / DSM 756 / JCM 1290 / NCIMB 6125 / NCTC 8237 / Type A).